We begin with the raw amino-acid sequence, 319 residues long: Ribosomal RNA small subunit methyltransferase H (319 aa).

S-adenosyl-L-methionine contacts are provided by residues 39–41 (GGH), aspartate 59, phenylalanine 83, aspartate 104, and glutamine 111.

This sequence belongs to the methyltransferase superfamily. RsmH family.

The protein localises to the cytoplasm. It carries out the reaction cytidine(1402) in 16S rRNA + S-adenosyl-L-methionine = N(4)-methylcytidine(1402) in 16S rRNA + S-adenosyl-L-homocysteine + H(+). Its function is as follows. Specifically methylates the N4 position of cytidine in position 1402 (C1402) of 16S rRNA. This chain is Ribosomal RNA small subunit methyltransferase H, found in Ralstonia pickettii (strain 12J).